The sequence spans 421 residues: 26S proteasome non-ATPase regulatory subunit 11A (421 aa).

Residues 227–391 (AYSYFYEAFE…GVLIVFDEPP (165 aa)) form the PCI domain.

The protein belongs to the proteasome subunit S9 family. Component of the lid subcomplex of the 19S proteasome regulatory particle complex (also named PA700 complex). The 26S proteasome consists of a 20S proteasome core and two 19S regulatory subunits.

The protein localises to the nucleus. It localises to the cytoplasm. It is found in the cytosol. Functionally, component of the lid subcomplex of the 26S proteasome, a multiprotein complex involved in the ATP-dependent degradation of ubiquitinated proteins. In the complex, psmd11a is required for proteasome assembly. The sequence is that of 26S proteasome non-ATPase regulatory subunit 11A (psmd11a) from Danio rerio (Zebrafish).